The primary structure comprises 205 residues: uncharacterized protein (205 aa).

This is an uncharacterized protein from Orgyia pseudotsugata (Douglas-fir tussock moth).